The primary structure comprises 356 residues: Tyrosine recombinase XerS (356 aa).

A Core-binding (CB) domain is found at Ile-16 to Thr-121. The Tyr recombinase domain occupies Ala-169 to Asp-354. Catalysis depends on residues Arg-210, Lys-234, His-306, Arg-309, and His-332. Tyr-341 functions as the O-(3'-phospho-DNA)-tyrosine intermediate in the catalytic mechanism.

It belongs to the 'phage' integrase family. XerS subfamily.

Its subcellular location is the cytoplasm. With respect to regulation, ftsK is required for recombination. Its function is as follows. Site-specific tyrosine recombinase, which acts by catalyzing the cutting and rejoining of the recombining DNA molecules. Essential to convert dimers of the bacterial chromosome into monomers to permit their segregation at cell division. The chain is Tyrosine recombinase XerS from Streptococcus equi subsp. equi (strain 4047).